Here is a 204-residue protein sequence, read N- to C-terminus: 3,4-dihydroxy-2-butanone 4-phosphate synthase (204 aa).

E30 is a binding site for Mg(2+). D34 is a binding site for D-ribulose 5-phosphate. C59 carries the S-glutathionyl cysteine modification. D-ribulose 5-phosphate contacts are provided by residues T85 and 142-146; that span reads RRGHT. H145 contributes to the Mg(2+) binding site.

In terms of assembly, homodimer. Mg(2+) serves as cofactor. Mn(2+) is required as a cofactor. In terms of processing, S-glutathionylation is reversible and dependent on a glutaredoxin.

The enzyme catalyses D-ribulose 5-phosphate = (2S)-2-hydroxy-3-oxobutyl phosphate + formate + H(+). It functions in the pathway cofactor biosynthesis; riboflavin biosynthesis; 2-hydroxy-3-oxobutyl phosphate from D-ribulose 5-phosphate: step 1/1. In terms of biological role, catalyzes the conversion of D-ribulose 5-phosphate to formate and 3,4-dihydroxy-2-butanone 4-phosphate. This Candida albicans (strain SC5314 / ATCC MYA-2876) (Yeast) protein is 3,4-dihydroxy-2-butanone 4-phosphate synthase (RIB3).